A 261-amino-acid chain; its full sequence is Succinate dehydrogenase [ubiquinone] iron-sulfur subunit, mitochondrial (261 aa).

Positions 31–122 (FKIYRWNPDT…DVKIYPLPHM (92 aa)) constitute a 2Fe-2S ferredoxin-type domain. The [2Fe-2S] cluster site is built by C82, C87, C90, and C102. The 4Fe-4S ferredoxin-type domain maps to 164-194 (DRKKLDGLYECILCACCSTACPSYWWNNEQY). [4Fe-4S] cluster is bound by residues C174, C177, and C180. Residue C184 coordinates [3Fe-4S] cluster. W189 lines the a ubiquinone pocket. [3Fe-4S] cluster is bound by residues C231 and C237. C241 is a binding site for [4Fe-4S] cluster.

It belongs to the succinate dehydrogenase/fumarate reductase iron-sulfur protein family. As to quaternary structure, component of complex II composed of four subunits: a flavoprotein (FP), an iron-sulfur protein (IP), and a cytochrome b composed of a large and a small subunit. [2Fe-2S] cluster is required as a cofactor. [3Fe-4S] cluster serves as cofactor. Requires [4Fe-4S] cluster as cofactor.

The protein localises to the mitochondrion inner membrane. It carries out the reaction a quinone + succinate = fumarate + a quinol. The protein operates within carbohydrate metabolism; tricarboxylic acid cycle; fumarate from succinate (eukaryal route): step 1/1. Functionally, iron-sulfur protein (IP) subunit of succinate dehydrogenase (SDH) that is involved in complex II of the mitochondrial electron transport chain and is responsible for transferring electrons from succinate to ubiquinone (coenzyme Q). The protein is Succinate dehydrogenase [ubiquinone] iron-sulfur subunit, mitochondrial (SDH2) of Eremothecium gossypii (strain ATCC 10895 / CBS 109.51 / FGSC 9923 / NRRL Y-1056) (Yeast).